The chain runs to 134 residues: Zinc finger protein 593 (134 aa).

Residues 1–25 are compositionally biased toward basic residues; that stretch reads MGRSRRTGAHRAHSLARQMKAKRRR. 2 disordered regions span residues 1–57 and 82–134; these read MGRS…DLPG and SKDH…DTST. Positions 26–36 are enriched in basic and acidic residues; sequence PDLDEIHRELR. A C2H2-type zinc finger spans residues 61–85; that stretch reads HRCLACARYFIDSTNLKTHFRSKDH.

Belongs to the ZNF593/BUD20 C2H2-type zinc-finger protein family. In terms of assembly, associates with pre-60S ribosomal particles. Ubiquitous. Detected in spleen, prostate, testis, small intestine, colon and to a minor level in thymus and peripheral blood leukocytes.

Its subcellular location is the nucleus. It localises to the nucleolus. The protein resides in the cytoplasm. Involved in pre-60S ribosomal particles maturation by promoting the nuclear export of the 60S ribosome. Negatively modulates the DNA binding activity of Oct-2 and therefore its transcriptional regulatory activity. This is Zinc finger protein 593 (ZNF593) from Homo sapiens (Human).